Here is a 226-residue protein sequence, read N- to C-terminus: MDSEHWISRLAAAKRFYAAQLGHADRAGMEEVDMDEEVRPEFACPYCYEDHDVVSLCAHLEEEHPFEPHAAPCPICSDKIAKDMLNHITVQHGYLFKNRRRLRRFVIPGSQALSLLSRDLREAHLQVLLGGGGHRSNNSSNTTNISADPLLSSFGLSFPTSDTEETSKPPISIPDDASVIKETPAQPWDSSIDSSLTREEREQKRKQASVRATFVQDLLLTTLFGD.

The segment at 158–208 (FPTSDTEETSKPPISIPDDASVIKETPAQPWDSSIDSSLTREEREQKRKQA) is disordered. Positions 196–205 (LTREEREQKR) are enriched in basic and acidic residues.

Belongs to the Di19 family.

This chain is Protein DEHYDRATION-INDUCED 19 (DI19-1), found in Oryza sativa subsp. japonica (Rice).